Reading from the N-terminus, the 161-residue chain is Eukaryotic translation initiation factor 5A-2 (161 aa).

K54 is modified (hypusine).

It belongs to the eIF-5A family. Lys-54 undergoes hypusination, a unique post-translational modification that consists in the addition of a butylamino group from spermidine to lysine side chain and leads to the formation of a hypusine residue. eIF-5As are the only known proteins to undergo this modification, which is essential for their function. As to expression, expressed in the somatic tissues.

The protein resides in the cytoplasm. Its function is as follows. Translation factor that promotes translation elongation and termination, particularly upon ribosome stalling at specific amino acid sequence contexts. Binds between the exit (E) and peptidyl (P) site of the ribosome and promotes rescue of stalled ribosome: specifically required for efficient translation of polyproline-containing peptides as well as other motifs that stall the ribosome. Acts as a ribosome quality control (RQC) cofactor by joining the RQC complex to facilitate peptidyl transfer during CAT tailing step. Acts in somatic tissues and its function in the soma is essential for normal growth and reproduction. In Caenorhabditis elegans, this protein is Eukaryotic translation initiation factor 5A-2 (iff-2).